Reading from the N-terminus, the 212-residue chain is Lipid A acyltransferase PagP (212 aa).

A signal peptide spans 1 to 24; sequence MYLKRTLITLSLITLPIVPFLSYA. The segment covering 36–47 has biased composition (polar residues); sequence NLAPVTVDSSDP. The disordered stretch occupies residues 36-56; the sequence is NLAPVTVDSSDPVSDKQGESW. Catalysis depends on residues H84, D127, and S128.

This sequence belongs to the lipid A palmitoyltransferase family. Homodimer.

It is found in the cell outer membrane. It carries out the reaction a lipid A + a 1,2-diacyl-sn-glycero-3-phosphocholine = a hepta-acyl lipid A + a 2-acyl-sn-glycero-3-phosphocholine. The enzyme catalyses a lipid IVA + a 1,2-diacyl-sn-glycero-3-phosphocholine = a lipid IVB + a 2-acyl-sn-glycero-3-phosphocholine. The catalysed reaction is a lipid IIA + a 1,2-diacyl-sn-glycero-3-phosphocholine = a lipid IIB + a 2-acyl-sn-glycero-3-phosphocholine. Its function is as follows. Transfers a fatty acid residue from the sn-1 position of a phospholipid to the N-linked hydroxyfatty acid chain on the proximal unit of lipid A or its precursors. This is Lipid A acyltransferase PagP from Pectobacterium carotovorum subsp. carotovorum (strain PC1).